The following is a 474-amino-acid chain: Probable cytosol aminopeptidase (474 aa).

Mn(2+) is bound by residues K237 and D242. K249 is a catalytic residue. Positions 260, 319, and 321 each coordinate Mn(2+). Residue R323 is part of the active site.

This sequence belongs to the peptidase M17 family. Mn(2+) serves as cofactor.

The protein localises to the cytoplasm. It catalyses the reaction Release of an N-terminal amino acid, Xaa-|-Yaa-, in which Xaa is preferably Leu, but may be other amino acids including Pro although not Arg or Lys, and Yaa may be Pro. Amino acid amides and methyl esters are also readily hydrolyzed, but rates on arylamides are exceedingly low.. The catalysed reaction is Release of an N-terminal amino acid, preferentially leucine, but not glutamic or aspartic acids.. Functionally, presumably involved in the processing and regular turnover of intracellular proteins. Catalyzes the removal of unsubstituted N-terminal amino acids from various peptides. This chain is Probable cytosol aminopeptidase, found in Helicobacter hepaticus (strain ATCC 51449 / 3B1).